A 228-amino-acid chain; its full sequence is Transcription repressor OFP8 (228 aa).

Composition is skewed to low complexity over residues Met1 to Arg14, Ala54 to Ser79, and Glu92 to Gln101. Disordered regions lie at residues Met1 to Ile21 and Ser36 to Glu143. Residues Arg107 to Ala120 are compositionally biased toward basic residues. The OVATE domain occupies Val157–Arg216.

Interacts with GSK2. Post-translationally, phosphorylated on serine and threonine residues by GSK2. Dephosphorylated during response to brassinosteroid. Expressed in roots, stems, stem nodes, young leaves, leaf sheaths, lamina joints, young spikelets, inflorescences, stamens and ovaries, embryos and seeds.

The protein resides in the nucleus. Its subcellular location is the cytoplasm. Probable transcriptional repressor that regulates multiple aspects of plant growth and development, partly through brassinosteroid (BR) signaling pathway. Acts downstream of the kinase GSK2, a negative regulator of BR signaling. In Oryza sativa subsp. japonica (Rice), this protein is Transcription repressor OFP8.